Consider the following 917-residue polypeptide: Serine/arginine repetitive matrix protein 1 (917 aa).

Methionine 1 is modified (N-acetylmethionine). Residues 1-151 form a necessary for DNA and RNA-binding region; that stretch reads MDAGFFRGTS…ASMKKQDEDK (151 aa). The segment at 1-156 is necessary for mRNA 3'-end cleavage and cytoplasmic accumulation; the sequence is MDAGFFRGTS…QDEDKDKRDK (156 aa). Citrulline is present on arginine 7. The PWI domain occupies 27–126; the sequence is QLKFAECLEK…AGIPSAFLEL (100 aa). A Glycyl lysine isopeptide (Lys-Gly) (interchain with G-Cter in SUMO2) cross-link involves residue lysine 127. The segment covering 139 to 170 has biased composition (basic and acidic residues); the sequence is EKLASMKKQDEDKDKRDKEEKESSREKRERSR. The tract at residues 139 to 917 is disordered; that stretch reads EKLASMKKQD…MRKAQVSPQS (779 aa). Position 140 is an N6-acetyllysine (lysine 140). Residues 171-207 show a composition bias toward basic residues; the sequence is SPRRRKSRSPSPRRRSSPVRRERKRSHSRSPRHRTKS. The span at 214 to 234 shows a compositional bias: basic and acidic residues; the sequence is PEKKEKTPELPEPSVKVKEPS. Threonine 220 is subject to Phosphothreonine. Residue serine 227 is modified to Phosphoserine. Lysine 231 is covalently cross-linked (Glycyl lysine isopeptide (Lys-Gly) (interchain with G-Cter in SUMO1); alternate). A Glycyl lysine isopeptide (Lys-Gly) (interchain with G-Cter in SUMO2); alternate cross-link involves residue lysine 231. A phosphoserine mark is found at serine 234 and serine 240. The residue at position 241 (threonine 241) is a Phosphothreonine. The span at 246–275 shows a compositional bias: basic and acidic residues; the sequence is KVPKPEPIPEPKEPSPEKNSKKEKEKEKTR. Lysine 249 is covalently cross-linked (Glycyl lysine isopeptide (Lys-Gly) (interchain with G-Cter in SUMO2)). Serine 260 is subject to Phosphoserine. Basic residues-rich tracts occupy residues 276-329 and 336-351; these read PRSR…RTPP and PRHR…RRRS. Residues 300-702 are necessary for speckles and matrix localization; sequence RRHRSRSRSY…NKRHSPSPRP (403 aa). The span at 352 to 368 shows a compositional bias: low complexity; sequence SASLSGSSSSSSSSRSR. Phosphoserine occurs at positions 389, 391, 393, and 402. At threonine 406 the chain carries Phosphothreonine. Serine 414 carries the post-translational modification Phosphoserine. Threonine 416 is modified (phosphothreonine). Phosphoserine occurs at positions 420, 429, 431, and 436. Polar residues predominate over residues 428 to 438; it reads VSVSPGRTSGK. Lysine 447 participates in a covalent cross-link: Glycyl lysine isopeptide (Lys-Gly) (interchain with G-Cter in SUMO2). A phosphoserine mark is found at serine 450 and serine 452. Lysine 459 is covalently cross-linked (Glycyl lysine isopeptide (Lys-Gly) (interchain with G-Cter in SUMO2)). 2 positions are modified to phosphoserine: serine 463 and serine 465. Lysine 472 is covalently cross-linked (Glycyl lysine isopeptide (Lys-Gly) (interchain with G-Cter in SUMO2)). Phosphoserine is present on serine 478. Low complexity predominate over residues 478–501; that stretch reads SVQQRRQYRRQNQQSSSDSGSSSS. Basic and acidic residues predominate over residues 503–518; that stretch reads EDERPKRSHVKNGEVG. Serine 524, serine 526, serine 528, serine 530, serine 532, serine 563, and serine 565 each carry phosphoserine. The span at 557–574 shows a compositional bias: basic residues; it reads SGRRRRSPSPPPTRRRRS. A Phosphothreonine modification is found at threonine 569. 2 positions are modified to phosphoserine: serine 574 and serine 576. Basic residues predominate over residues 581 to 606; that stretch reads PRRRRTPTPPPRRRTPSPPPRRRSPS. Residues threonine 586, threonine 588, and threonine 595 each carry the phosphothreonine modification. A Phosphoserine modification is found at serine 597. Positions 607–619 are enriched in low complexity; that stretch reads PRRYSPPIQRRYS. Tyrosine 610 bears the Phosphotyrosine mark. Residues serine 611, serine 619, and serine 621 each carry the phosphoserine modification. Phosphothreonine is present on threonine 628. 5 positions are modified to phosphoserine: serine 630, serine 640, serine 642, serine 650, and serine 652. The segment covering 635-650 has biased composition (basic residues); that stretch reads PKRRASPSPPPKRRVS. Positions 663 to 677 are enriched in basic residues; the sequence is TKRRSPSLSSKHRKG. Over residues 699–713 the composition is skewed to pro residues; it reads SPRPRAPQTSSPPPV. Residues serine 708, serine 709, serine 718, serine 720, serine 726, and serine 728 each carry the phosphoserine modification. Composition is skewed to low complexity over residues 714–732, 749–772, and 782–799; these read RRGA…PSTR, AASP…SPEP, and SPVQ…AVPV. Threonine 731 carries the phosphothreonine modification. Residues serine 751, serine 753, serine 761, serine 765, serine 767, serine 769, serine 782, serine 786, serine 788, and serine 790 each carry the phosphoserine modification. At threonine 791 the chain carries Phosphothreonine. Phosphoserine is present on residues serine 794 and serine 804. Position 806 is a phosphothreonine (threonine 806). Phosphoserine occurs at positions 808, 810, and 815. Residues 822-847 are compositionally biased toward basic residues; it reads KKKKKKKDKKHKKDKKHKKHKKHKKE. A compositionally biased stretch (low complexity) spans 850 to 879; the sequence is VAAAAAAAVTPAAIAAATTTLAQEEPVAAP. A Glycyl lysine isopeptide (Lys-Gly) (interchain with G-Cter in SUMO2) cross-link involves residue lysine 882. Phosphothreonine is present on threonine 885. Serine 887 carries the post-translational modification Phosphoserine. Residues 895–905 show a composition bias toward basic and acidic residues; the sequence is DLEKHLREKAL. Position 914 is a phosphoserine (serine 914).

This sequence belongs to the splicing factor SR family. As to quaternary structure, identified in the spliceosome C complex. Found in a pre-mRNA splicing complex with SFRS4, SFRS5, SNRP70, SNRPA1, SRRM1 and SRRM2. Component of the minor spliceosome, which splices U12-type introns. Found in a pre-mRNA exonic splicing enhancer (ESE) complex with SNRP70, SNRPA1, SRRM1 and TRA2B/SFRS10. Found in a mRNA splicing-dependent exon junction complex (EJC) with DEK, PRPF8, NCBP1, RBM8A, RNPS1, SRRM1 and ALYREF/THOC4. Interacts with DDX39B, CPSF1, RBM8A, RNPS1, and ALYREF/THOC4. Seems to be a compound of RNA export complexes that are released from speckles in a ATP-dependent manner. Phosphorylated on multiple serine and threonine residues by DYRK3 during the G2-to-M transition, after the nuclear-envelope breakdown. Phosphorylation by DYRK3 promotes disassembly of nuclear speckles. Post-translationally, citrullinated by PADI4.

In terms of biological role, part of pre- and post-splicing multiprotein mRNP complexes. As a component of the minor spliceosome, involved in the splicing of U12-type introns in pre-mRNAs. Involved in numerous pre-mRNA processing events. Promotes constitutive and exonic splicing enhancer (ESE)-dependent splicing activation by bridging together sequence-specific (SR family proteins, SFRS4, SFRS5 and TRA2B/SFRS10) and basal snRNP (SNRP70 and SNRPA1) factors of the spliceosome. Stimulates mRNA 3'-end cleavage independently of the formation of an exon junction complex. Binds both pre-mRNA and spliced mRNA 20-25 nt upstream of exon-exon junctions. Binds RNA and DNA with low sequence specificity and has similar preference for either double- or single-stranded nucleic acid substrates. This chain is Serine/arginine repetitive matrix protein 1 (SRRM1), found in Pongo abelii (Sumatran orangutan).